Here is a 106-residue protein sequence, read N- to C-terminus: Small ribosomal subunit protein mS33 (106 aa).

N-acetylserine is present on S2. The segment at 81–106 (EQRRLKKLRGKGKPRKGEGKRATKKK) is disordered. The segment covering 84–94 (RLKKLRGKGKP) has biased composition (basic residues). The span at 95–106 (RKGEGKRATKKK) shows a compositional bias: basic and acidic residues.

The protein belongs to the mitochondrion-specific ribosomal protein mS33 family. In terms of assembly, component of the mitochondrial ribosome small subunit (28S) which comprises a 12S rRNA and about 30 distinct proteins.

Its subcellular location is the mitochondrion. The polypeptide is Small ribosomal subunit protein mS33 (Mrps33) (Mus musculus (Mouse)).